A 65-amino-acid polypeptide reads, in one-letter code: uncharacterized protein (65 aa).

The protein localises to the plastid. Its subcellular location is the chloroplast. This is an uncharacterized protein from Mesostigma viride (Green alga).